The sequence spans 314 residues: Small ribosomal subunit biogenesis GTPase RsgA (314 aa).

A CP-type G domain is found at 78–238 (SEIFREKLIA…IIDSPGFQEF (161 aa)). Residues 127-130 (NKID) and 180-188 (GQSGVGKST) each bind GTP. Zn(2+)-binding residues include Cys-262, Cys-267, His-269, and Cys-275.

It belongs to the TRAFAC class YlqF/YawG GTPase family. RsgA subfamily. Monomer. Associates with 30S ribosomal subunit, binds 16S rRNA. Zn(2+) serves as cofactor.

It is found in the cytoplasm. Its function is as follows. One of several proteins that assist in the late maturation steps of the functional core of the 30S ribosomal subunit. Helps release RbfA from mature subunits. May play a role in the assembly of ribosomal proteins into the subunit. Circularly permuted GTPase that catalyzes slow GTP hydrolysis, GTPase activity is stimulated by the 30S ribosomal subunit. In Nitrosomonas europaea (strain ATCC 19718 / CIP 103999 / KCTC 2705 / NBRC 14298), this protein is Small ribosomal subunit biogenesis GTPase RsgA.